Consider the following 77-residue polypeptide: Protein RADIALIS-like 4 (77 aa).

The 56-residue stretch at 6-61 (MSTSSWTAREDKQFEMALAKFDKDTPDRWQKIARAVGGKSTEEVKRHYELLLRDVN) folds into the SANT domain.

Expressed just outside the vascular bundles in the rosette stem and the leaf traces. Not detected in floral primordia.

It is found in the nucleus. Its function is as follows. Probable transcription factor. This chain is Protein RADIALIS-like 4 (RL4), found in Arabidopsis thaliana (Mouse-ear cress).